We begin with the raw amino-acid sequence, 528 residues long: Na(+)/H(+) antiporter NhaB (528 aa).

Residues 1 to 23 (MPISLGNAFIKNFLGKAPDWYKV) are Cytoplasmic-facing. A helical membrane pass occupies residues 24–46 (AIIAFLIINPIVFFLINPFVAGW). The Periplasmic segment spans residues 47–95 (LLVAEFIFTLAMALKCYPLQPGGLLAIEAIAIGMTSPAQVKHELVANIE). Residues 96 to 118 (VLLLLVFMVAGIYFMKHLLLFIF) traverse the membrane as a helical segment. Residues 119-129 (TKILLGIRSKT) lie on the Cytoplasmic side of the membrane. Residues 130–163 (LLSLAFCFAAAFLSAFLDALTVIAVVISVAIGFY) form a helical membrane-spanning segment. At 164–239 (SIYHKVASGN…ADQAGWLFGE (76 aa)) the chain is on the periplasmic side. Residues 240–262 (FLIRMSPVTLPVFFCGLITCALV) traverse the membrane as a helical segment. Over 263 to 297 (EKLKVFGYGAKLPNNVRQILVDFDNEERKTRTNQD) the chain is Cytoplasmic. A helical membrane pass occupies residues 298–317 (VAKLWVQGLIAVWLIVALAL). The Periplasmic segment spans residues 318–320 (HLA). The chain crosses the membrane as a helical span at residues 321-340 (AVGLIGLSVIILATAFTGVI). The Cytoplasmic portion of the chain corresponds to 341 to 352 (EEHSMGKAFEEA). Residues 353 to 375 (LPFTALLAVFFSIVAVIIDQELF) traverse the membrane as a helical segment. Residues 376–389 (KPVIDAVLAVEDKG) lie on the Periplasmic side of the membrane. A helical transmembrane segment spans residues 390 to 412 (TQLALFYVANGLLSMVSDNVFVG). The Cytoplasmic portion of the chain corresponds to 413-477 (TVYINEVKTA…PLIRLSYGRM (65 aa)). Residues 478-500 (VIMALPYTIVLAIVGLMGIMFFL) traverse the membrane as a helical segment. The Periplasmic segment spans residues 501-528 (EPATASFYDAGWILPHSGDLTPVVSGGH).

This sequence belongs to the NhaB Na(+)/H(+) (TC 2.A.34) antiporter family.

It localises to the cell inner membrane. The enzyme catalyses 2 Na(+)(in) + 3 H(+)(out) = 2 Na(+)(out) + 3 H(+)(in). In terms of biological role, na(+)/H(+) antiporter that extrudes sodium in exchange for external protons. This Vibrio alginolyticus protein is Na(+)/H(+) antiporter NhaB.